Reading from the N-terminus, the 490-residue chain is Cobyric acid synthase (490 aa).

The 183-residue stretch at 250 to 432 (QLEIVVIRLP…LHGLLDNHAW (183 aa)) folds into the GATase cobBQ-type domain. Residue Cys-328 is the Nucleophile of the active site. Residue His-424 is part of the active site.

This sequence belongs to the CobB/CobQ family. CobQ subfamily.

The protein operates within cofactor biosynthesis; adenosylcobalamin biosynthesis. Its function is as follows. Catalyzes amidations at positions B, D, E, and G on adenosylcobyrinic A,C-diamide. NH(2) groups are provided by glutamine, and one molecule of ATP is hydrogenolyzed for each amidation. In Gloeobacter violaceus (strain ATCC 29082 / PCC 7421), this protein is Cobyric acid synthase.